Here is a 154-residue protein sequence, read N- to C-terminus: Large ribosomal subunit protein uL13 (154 aa).

It belongs to the universal ribosomal protein uL13 family. Part of the 50S ribosomal subunit.

This protein is one of the early assembly proteins of the 50S ribosomal subunit, although it is not seen to bind rRNA by itself. It is important during the early stages of 50S assembly. This Rhodopseudomonas palustris (strain BisB5) protein is Large ribosomal subunit protein uL13.